Reading from the N-terminus, the 264-residue chain is Spermidine/putrescine transport system permease protein PotC (264 aa).

The Cytoplasmic segment spans residues 1 to 7 (MIGRLLR). A helical transmembrane segment spans residues 8–27 (GGFMTAIYAYLYIPIIILIV). Residues 28-65 (NSFNSSRFGINWQGFTTKWYSLLMNNDSLLQAAQHSLT) are Periplasmic-facing. Residues 60-248 (AQHSLTMAVF…VLSLVMVIAS (189 aa)) enclose the ABC transmembrane type-1 domain. Residues 66–85 (MAVFSATFATLIGSLTAVAL) traverse the membrane as a helical segment. At 86–100 (YRYRFRGKPFVSGML) the chain is on the cytoplasmic side. Residues 101–120 (FVVMMSPDIVMAISLLVLFM) form a helical membrane-spanning segment. Topologically, residues 121-128 (LLGIQLGF) are periplasmic. The chain crosses the membrane as a helical span at residues 129 to 148 (WSLLFSHITFCLPFVVVTVY). The Cytoplasmic segment spans residues 149 to 176 (SRLKGFDVRMLEAAKDLGASEFTILRKI). A helical transmembrane segment spans residues 177–196 (ILPLAMPAVAAGWVLSFTLS). At 197 to 231 (MDDVVVSSFVTGPSYEILPLKIYSMVKVGVSPEVN) the chain is on the periplasmic side. The helical transmembrane segment at 232-251 (ALATILLVLSLVMVIASQLI) threads the bilayer. At 252 to 264 (ARDKTKGNTGDVK) the chain is on the cytoplasmic side.

Belongs to the binding-protein-dependent transport system permease family. CysTW subfamily.

Its subcellular location is the cell inner membrane. In terms of biological role, required for the activity of the bacterial periplasmic transport system of putrescine and spermidine. The chain is Spermidine/putrescine transport system permease protein PotC (potC) from Escherichia coli O157:H7.